Consider the following 523-residue polypeptide: MSQQVIIFDTTLRDGEQALQASLSVKEKLQIALALERMGVDVMEVGFPVSSPGDFESVQTIALQVKNSRVCALARCVEKDIDVAAESLKVAEAFRIHTFIATSPMHIATKLRSTLDEVIERAIYMVKRARNYTDDVEFSCEDAGRTPIADLARVVEAAINAGATTINIPDTVGYTMPFEFAGIISGLYERVPNIDKAIISVHTHDDLGLAVGNSLAAVHAGARQVEGAMNGIGERAGNCSLEEVIMAIKVRKDILNVHTAINHQEIWRTSQLVSQICNMPIPANKAIVGSGAFAHSSGIHQDGVLKNRENYEIMTPESIGLNQIQLNLTSRSGRAAVKHRMDEMGYKESEYNLDNLYDAFLKLADKKGQVFDYDLEALAFIGKQQEEPEHFRLDYFSVQSGSNDIATAAVKLACGEEVKAEAANGNGPVDAVYQAINRITDYNVELVKYSLTAKGHGKDALGQVDIVANYNGRRFHGVGLATDIVESSAKAMVHVLNNIWRAAEVEKELQRKAQHNENNKETV.

The Pyruvate carboxyltransferase domain maps to 5–267 (VIIFDTTLRD…HTAINHQEIW (263 aa)). Asp-14, His-202, His-204, and Asn-238 together coordinate Mn(2+). Positions 392–523 (RLDYFSVQSG…QHNENNKETV (132 aa)) are regulatory domain.

It belongs to the alpha-IPM synthase/homocitrate synthase family. LeuA type 1 subfamily. As to quaternary structure, homodimer. Mn(2+) serves as cofactor.

The protein localises to the cytoplasm. It catalyses the reaction 3-methyl-2-oxobutanoate + acetyl-CoA + H2O = (2S)-2-isopropylmalate + CoA + H(+). The protein operates within amino-acid biosynthesis; L-leucine biosynthesis; L-leucine from 3-methyl-2-oxobutanoate: step 1/4. Catalyzes the condensation of the acetyl group of acetyl-CoA with 3-methyl-2-oxobutanoate (2-ketoisovalerate) to form 3-carboxy-3-hydroxy-4-methylpentanoate (2-isopropylmalate). This chain is 2-isopropylmalate synthase, found in Escherichia coli O81 (strain ED1a).